The primary structure comprises 560 residues: Bifunctional NAD(P)H-hydrate repair enzyme (560 aa).

Residues 1–241 form an NAD(P)H-hydrate epimerase region; the sequence is MLSRLSERCT…WMTAPERMRV (241 aa). Residues 29-235 form the YjeF N-terminal domain; sequence LRDAEPAAAA…SLGLEDWMTA (207 aa). The tract at residues 77-81 is NADPHX 1; for epimerase activity; it reads NNGGD. K(+) is bound by residues asparagine 78 and aspartate 145. An NADPHX 1; for epimerase activity region spans residues 149 to 155; that stretch reads GTGICGP. (6S)-NADPHX contacts are provided by tyrosine 160 and aspartate 178. Serine 181 serves as a coordination point for K(+). The region spanning 249-547 is the YjeF C-terminal domain; the sequence is LDDVYEYFGI…HRVPLIVNAS (299 aa). An ADP-dependent (S)-NAD(P)H-hydrate dehydratase region spans residues 249-560; that stretch reads LDDVYEYFGI…PASRQRPSGQ (312 aa). Glycine 351 contacts (6S)-NADPHX. The tract at residues 417–423 is NADPHX 2; for dehydratase activity; sequence HPGEAAR. ADP contacts are provided by residues 454-458 and 475-484; these read KGPGT and NAGMASGGMG. Aspartate 485 serves as a coordination point for (6S)-NADPHX.

The protein in the N-terminal section; belongs to the NnrE/AIBP family. It in the C-terminal section; belongs to the NnrD/CARKD family. The cofactor is K(+).

It carries out the reaction (6S)-NADHX + ADP = AMP + phosphate + NADH + H(+). It catalyses the reaction (6S)-NADPHX + ADP = AMP + phosphate + NADPH + H(+). The enzyme catalyses (6R)-NADHX = (6S)-NADHX. The catalysed reaction is (6R)-NADPHX = (6S)-NADPHX. Its function is as follows. Bifunctional enzyme that catalyzes the epimerization of the S- and R-forms of NAD(P)HX and the dehydration of the S-form of NAD(P)HX at the expense of ADP, which is converted to AMP. This allows the repair of both epimers of NAD(P)HX, a damaged form of NAD(P)H that is a result of enzymatic or heat-dependent hydration. The polypeptide is Bifunctional NAD(P)H-hydrate repair enzyme (Leishmania major).